The chain runs to 470 residues: Sugar transporter ESL1 (470 aa).

The short motif at 10-16 is the Essential for the localization to the vacuole membrane element; that stretch reads LEAGLLL. The next 12 membrane-spanning stretches (helical) occupy residues 28 to 48, 68 to 88, 99 to 119, 130 to 150, 157 to 177, 186 to 206, 268 to 288, 303 to 323, 332 to 352, 368 to 388, 404 to 424, and 430 to 450; these read ITAVVLFSTFVSVCGSFCFGC, VAQYSMFGSIMTFGGMIGAIF, KGTMWFAQIFCIFGWVAVALA, LSTGFAVGLLSYVIPVYIAEI, GAFVFANQLMQSCGLSLFYVI, LALIGLIPCALQVVTLFFIPE, VVIGVGLMLLQQLSGSSGLMY, IGSMILAVIMIPKALLGLILV, LLASTGGMCFFSLLLSFSFCF, IGVVGFISSFAVGMGGLPWII, LVTLANWSFGWIVAFAYNFML, and GTFLIFFTICGAGIVFIYAMV.

It belongs to the major facilitator superfamily. Sugar transporter (TC 2.A.1.1) family. As to expression, expressed in both shoots and roots. In roots, strongly expressed in pericycle and xylem parenchyma cells, and to a lesser extent in the root endodermis. In flowers, expressed in sepals.

It localises to the vacuole membrane. The protein localises to the vesicle. Functionally, sugar transporter. Transports monosaccharides across the vacuolar membrane independently from a proton gradient. May function coordinately with the vacuolar invertase to regulate osmotic pressure by affecting the accumulation of sugar in the cells under abiotic stress conditions. This chain is Sugar transporter ESL1, found in Arabidopsis thaliana (Mouse-ear cress).